The chain runs to 134 residues: Small ribosomal subunit protein uS8c (134 aa).

This sequence belongs to the universal ribosomal protein uS8 family. As to quaternary structure, part of the 30S ribosomal subunit.

It is found in the plastid. It localises to the chloroplast. One of the primary rRNA binding proteins, it binds directly to 16S rRNA central domain where it helps coordinate assembly of the platform of the 30S subunit. The protein is Small ribosomal subunit protein uS8c (rps8) of Arabidopsis thaliana (Mouse-ear cress).